The following is a 258-amino-acid chain: Indole-3-glycerol phosphate synthase (258 aa).

It belongs to the TrpC family.

The enzyme catalyses 1-(2-carboxyphenylamino)-1-deoxy-D-ribulose 5-phosphate + H(+) = (1S,2R)-1-C-(indol-3-yl)glycerol 3-phosphate + CO2 + H2O. The protein operates within amino-acid biosynthesis; L-tryptophan biosynthesis; L-tryptophan from chorismate: step 4/5. This Geobacillus sp. (strain WCH70) protein is Indole-3-glycerol phosphate synthase.